The sequence spans 976 residues: Terminal uridylyltransferase 1 (976 aa).

Disordered stretches follow at residues 1-47 (MVSK…DADF) and 129-185 (TGRS…TTEG). Residues 1 to 188 (MVSKYHRLLQ…EDDTTEGPRG (188 aa)) are required for oligomerization and may contribute to the incorporation into the MPsome complex. Residues 147–183 (ADDESDGNLDTDGSDASEGDEVESTTDADVYGEDDTT) show a composition bias toward acidic residues. The C2H2-type; atypical zinc finger occupies 190–221 (VRLYSCDACPHAVFTTHAALLAHAEEHHADLL). Residues Cys195, Cys198, His212, and His217 each coordinate Zn(2+). Residues Ser298 and 309–312 (ADID) each bind UTP. Residues Asp310 and Asp312 each coordinate Mg(2+). Arg358 lines the RNA pocket. Residues 366 to 425 (ASSPILTVARRDAEDVVARSIRFILNGPATREDRLLLEGSVRDAVGPTGVQQVWWNRTSD) enclose the PAP-associated domain. Residues 480 to 484 (GIRNS), Lys505, Lys509, and 523 to 524 (SY) contribute to the UTP site. The Nucleotide recognition motif (NRM) motif lies at 652-661 (IEDPYEENLN). The segment at 700-976 (DSSGTPAAGG…SKVTPFKSPR (277 aa)) is important for catalytic activity and RNA binding. Residues 732-755 (SESRRLPQSNSDNSGRIANGDNES) are disordered.

The protein belongs to the DNA polymerase type-B-like family. In terms of assembly, oligomer. Component of the mitochondrial 3' processome (MPsome) complex composed at least of terminal uridylyltransferase KRET1/TUT1, 3'-5' exonuclease DSS1, MPSS1, MPSS2 and MPSS3. Within the complex, interacts with DSS1, MPSS1 and MPSS3. The cofactor is Mg(2+). Mn(2+) is required as a cofactor.

The protein resides in the mitochondrion. It carries out the reaction RNA(n) + UTP = RNA(n)-3'-uridine ribonucleotide + diphosphate. Terminal uridylyltransferase which is involved in the post-transcriptional editing of mitochondrial RNA, a process involving the addition and deletion of uridine (U) nucleotides in the pre-RNA. Specifically, catalyzes the addition of Us to the 3'-hydroxyl group of guided RNA (gRNA), ribosomal RNA (rRNA) and some mRNAs. As part of the mitochondrial 3' processome (MPsome), catalyzes the primary 3' uridylation of gRNA precursors to facilitate their recognition and to induce their processive 3'-5' degradation by DSS1, and the secondary 3' uridylation of mature gRNAs. Involved in the 3' uridylylation of the long A/U tail of some edited and never-edited mRNAs. Promotes 3' uridylylation-mediated decay of some never-edited mRNAs. Does not mediate RNA-independent UTP polymerization. The sequence is that of Terminal uridylyltransferase 1 from Trypanosoma brucei brucei.